The primary structure comprises 796 residues: AUGMIN subunit 5 (796 aa).

The tract at residues 79–120 is disordered; it reads HGGSSNASIGSSVNPGKEESKSKGRRKDKTVTGESSSYAEDR. Over residues 80-92 the composition is skewed to polar residues; sequence GGSSNASIGSSVN. 2 coiled-coil regions span residues 115–191 and 462–501; these read SYAE…EATR and GKER…LKKK.

This sequence belongs to the HAUS5 family. Part of the augmin complex composed of 8 subunits. The complex acts on microtubules and interacts with gamma-tubulin in spindles and the phragmoplast.

It is found in the cytoplasm. Its subcellular location is the cytoskeleton. It localises to the spindle. The protein localises to the phragmoplast. Involved in microtubules reorganization during spindle and phragmoplast development. The polypeptide is AUGMIN subunit 5 (Arabidopsis thaliana (Mouse-ear cress)).